Here is a 343-residue protein sequence, read N- to C-terminus: L-threonine 3-dehydrogenase (343 aa).

Cysteine 38 contacts Zn(2+). Active-site charge relay system residues include threonine 40 and histidine 43. Residues histidine 63, glutamate 64, cysteine 93, cysteine 96, cysteine 99, and cysteine 107 each contribute to the Zn(2+) site. NAD(+)-binding positions include isoleucine 175, aspartate 195, arginine 200, 262-264, and 286-287; these read LGI and IY.

The protein belongs to the zinc-containing alcohol dehydrogenase family. In terms of assembly, homotetramer. Zn(2+) serves as cofactor.

It is found in the cytoplasm. It carries out the reaction L-threonine + NAD(+) = (2S)-2-amino-3-oxobutanoate + NADH + H(+). Its pathway is amino-acid degradation; L-threonine degradation via oxydo-reductase pathway; glycine from L-threonine: step 1/2. In terms of biological role, catalyzes the NAD(+)-dependent oxidation of L-threonine to 2-amino-3-ketobutyrate. This chain is L-threonine 3-dehydrogenase, found in Paraburkholderia xenovorans (strain LB400).